A 273-amino-acid polypeptide reads, in one-letter code: Transmembrane protein 202 (273 aa).

Helical transmembrane passes span 53–75 (HIYI…IAMS), 121–141 (FFLI…SSWI), 155–175 (VSML…LFVA), and 189–209 (LLWT…AGII). Positions 242–273 (TTVSPAKDEGPRSEMESLSVREKNLPKSGLWW) are disordered. A compositionally biased stretch (basic and acidic residues) spans 247–266 (AKDEGPRSEMESLSVREKNL).

Its subcellular location is the membrane. This chain is Transmembrane protein 202 (TMEM202), found in Homo sapiens (Human).